The chain runs to 422 residues: Tyrosine--tRNA ligase 1 (422 aa).

Tyr-35 is a binding site for L-tyrosine. A 'HIGH' region motif is present at residues 40-49 (PTADSLHIGH). The L-tyrosine site is built by Tyr-170 and Gln-174. A 'KMSKS' region motif is present at residues 232–236 (KFGKT). Position 235 (Lys-235) interacts with ATP. The region spanning 355–421 (LSLVDVLVQS…GKKKYFLVTY (67 aa)) is the S4 RNA-binding domain.

This sequence belongs to the class-I aminoacyl-tRNA synthetase family. TyrS type 1 subfamily. In terms of assembly, homodimer.

It localises to the cytoplasm. It carries out the reaction tRNA(Tyr) + L-tyrosine + ATP = L-tyrosyl-tRNA(Tyr) + AMP + diphosphate + H(+). Catalyzes the attachment of tyrosine to tRNA(Tyr) in a two-step reaction: tyrosine is first activated by ATP to form Tyr-AMP and then transferred to the acceptor end of tRNA(Tyr). The sequence is that of Tyrosine--tRNA ligase 1 from Bacillus subtilis (strain 168).